Reading from the N-terminus, the 276-residue chain is 2,3,4,5-tetrahydropyridine-2,6-dicarboxylate N-succinyltransferase (276 aa).

Residues Arg108 and Asp145 each coordinate substrate.

It belongs to the transferase hexapeptide repeat family. Homotrimer.

The protein localises to the cytoplasm. The enzyme catalyses (S)-2,3,4,5-tetrahydrodipicolinate + succinyl-CoA + H2O = (S)-2-succinylamino-6-oxoheptanedioate + CoA. It participates in amino-acid biosynthesis; L-lysine biosynthesis via DAP pathway; LL-2,6-diaminopimelate from (S)-tetrahydrodipicolinate (succinylase route): step 1/3. The sequence is that of 2,3,4,5-tetrahydropyridine-2,6-dicarboxylate N-succinyltransferase from Caulobacter vibrioides (strain ATCC 19089 / CIP 103742 / CB 15) (Caulobacter crescentus).